The chain runs to 152 residues: D-aminoacyl-tRNA deacylase (152 aa).

A Gly-cisPro motif, important for rejection of L-amino acids motif is present at residues 137–138 (GP).

The protein belongs to the DTD family. In terms of assembly, homodimer.

The protein localises to the cytoplasm. It catalyses the reaction glycyl-tRNA(Ala) + H2O = tRNA(Ala) + glycine + H(+). The enzyme catalyses a D-aminoacyl-tRNA + H2O = a tRNA + a D-alpha-amino acid + H(+). An aminoacyl-tRNA editing enzyme that deacylates mischarged D-aminoacyl-tRNAs. Also deacylates mischarged glycyl-tRNA(Ala), protecting cells against glycine mischarging by AlaRS. Acts via tRNA-based rather than protein-based catalysis; rejects L-amino acids rather than detecting D-amino acids in the active site. By recycling D-aminoacyl-tRNA to D-amino acids and free tRNA molecules, this enzyme counteracts the toxicity associated with the formation of D-aminoacyl-tRNA entities in vivo and helps enforce protein L-homochirality. In Geobacter sulfurreducens (strain ATCC 51573 / DSM 12127 / PCA), this protein is D-aminoacyl-tRNA deacylase.